We begin with the raw amino-acid sequence, 364 residues long: Pectinesterase 1 (364 aa).

A signal peptide spans 1-22 (MSCIAVEAVLLGILLYIPIVLS). The N-linked (GlcNAc...) asparagine glycan is linked to Asn-103. Asp-220 is a catalytic residue.

The protein belongs to the pectinesterase family. Post-translationally, glycosylated. Expressed in pollen.

Its subcellular location is the secreted. It catalyses the reaction [(1-&gt;4)-alpha-D-galacturonosyl methyl ester](n) + n H2O = [(1-&gt;4)-alpha-D-galacturonosyl](n) + n methanol + n H(+). Its pathway is glycan metabolism; pectin degradation; 2-dehydro-3-deoxy-D-gluconate from pectin: step 1/5. Catalyzes the demethylesterification of homogalacturonan components of pectin. May be involved in pollen tube development. This is Pectinesterase 1 from Olea europaea (Common olive).